Reading from the N-terminus, the 325-residue chain is Acetyl-coenzyme A carboxylase carboxyl transferase subunit alpha (325 aa).

One can recognise a CoA carboxyltransferase C-terminal domain in the interval 35–292 (EIEKLEARLT…DRVLRASLKQ (258 aa)).

It belongs to the AccA family. As to quaternary structure, acetyl-CoA carboxylase is a heterohexamer composed of biotin carboxyl carrier protein (AccB), biotin carboxylase (AccC) and two subunits each of ACCase subunit alpha (AccA) and ACCase subunit beta (AccD).

Its subcellular location is the cytoplasm. The enzyme catalyses N(6)-carboxybiotinyl-L-lysyl-[protein] + acetyl-CoA = N(6)-biotinyl-L-lysyl-[protein] + malonyl-CoA. It participates in lipid metabolism; malonyl-CoA biosynthesis; malonyl-CoA from acetyl-CoA: step 1/1. Its function is as follows. Component of the acetyl coenzyme A carboxylase (ACC) complex. First, biotin carboxylase catalyzes the carboxylation of biotin on its carrier protein (BCCP) and then the CO(2) group is transferred by the carboxyltransferase to acetyl-CoA to form malonyl-CoA. This chain is Acetyl-coenzyme A carboxylase carboxyl transferase subunit alpha, found in Geobacillus thermodenitrificans (strain NG80-2).